Consider the following 493-residue polypeptide: Na(+)/H(+) antiporter subunit D (493 aa).

14 helical membrane passes run 4 to 23 (LVILPILIPFIVGSFLILFA), 30 to 52 (RVISGFAVVGMLLVSIYLAVDVY), 72 to 94 (LVADLFATMMVILASIVGVVCLF), 107 to 126 (YYFYPFYFFLLAGVNGAFLT), 130 to 149 (FNLFVFFEVMLIASYILIVL), 162 to 184 (YVVINVFASILFIVGVAYIYSIT), 204 to 226 (VLNVIAVIFLVVFAMKGGLFPLY), 233 to 255 (YFGPPAAIAALFGGLLTKVGIYA), 270 to 292 (FTHTLILILAGLTMFFGVLGAVS), 299 to 321 (ILSYHIISQVGYMVMGLGIYTQL), 325 to 347 (GAIYYIAHHIIVKAALFLFAGAT), 368 to 390 (WLAWMFFISAISLAGIPPLSGFF), 405 to 427 (YIIAAVALAVGLLTLFSMMKIFI), and 448 to 470 (LLLPIVPLVALTIILGFAAEPIF).

Belongs to the CPA3 antiporters (TC 2.A.63) subunit D family. In terms of assembly, forms a heterooligomeric complex that consists of seven subunits: MrpA, MrpB, MrpC, MrpD, MrpE, MrpF and MrpG.

It localises to the cell membrane. In terms of biological role, mnh complex is a Na(+)Li(+)/H(+) antiporter involved in Na(+) and/or Li(+) excretion and Na(+) resistance. Na(+)/H(+) antiport consumes a transmembrane electrical potential, and is thus inferred to be electrogenic. Does not transport K(+), Ca(2+) or Mg(2+). Mrp complex is a Na(+)/H(+) antiporter involved in Na(+) excretion and Na(+) resistance. In Alkalihalophilus pseudofirmus (strain ATCC BAA-2126 / JCM 17055 / OF4) (Bacillus pseudofirmus), this protein is Na(+)/H(+) antiporter subunit D (mrpD).